The chain runs to 224 residues: Uracil-DNA glycosylase (224 aa).

Aspartate 65 functions as the Proton acceptor in the catalytic mechanism.

It belongs to the uracil-DNA glycosylase (UDG) superfamily. UNG family.

It is found in the cytoplasm. The catalysed reaction is Hydrolyzes single-stranded DNA or mismatched double-stranded DNA and polynucleotides, releasing free uracil.. Its function is as follows. Excises uracil residues from the DNA which can arise as a result of misincorporation of dUMP residues by DNA polymerase or due to deamination of cytosine. This is Uracil-DNA glycosylase from Buchnera aphidicola subsp. Baizongia pistaciae (strain Bp).